Consider the following 362-residue polypeptide: 2-aminoethylphosphonate--pyruvate transaminase (362 aa).

Position 193 is an N6-(pyridoxal phosphate)lysine (Lys193).

The protein belongs to the class-V pyridoxal-phosphate-dependent aminotransferase family. PhnW subfamily. In terms of assembly, homodimer. Pyridoxal 5'-phosphate is required as a cofactor.

It catalyses the reaction (2-aminoethyl)phosphonate + pyruvate = phosphonoacetaldehyde + L-alanine. Its function is as follows. Involved in phosphonate degradation. This chain is 2-aminoethylphosphonate--pyruvate transaminase, found in Phocaeicola vulgatus (strain ATCC 8482 / DSM 1447 / JCM 5826 / CCUG 4940 / NBRC 14291 / NCTC 11154) (Bacteroides vulgatus).